The following is a 590-amino-acid chain: Threonine dehydratase biosynthetic, chloroplastic (590 aa).

The transit peptide at 1–44 directs the protein to the chloroplast; sequence MLSTSTTNSSILPFRSRASSSTFIARPPANFNSIFTTSVRVFPI. Lysine 139 is modified (N6-(pyridoxal phosphate)lysine). ACT-like domains are found at residues 416-488 and 509-580; these read ALLG…NISH and EVFV…IDQY.

The protein belongs to the serine/threonine dehydratase family. It depends on pyridoxal 5'-phosphate as a cofactor. Found at higher levels in flowers than in other organs.

It localises to the plastid. It is found in the chloroplast. It catalyses the reaction L-threonine = 2-oxobutanoate + NH4(+). It participates in amino-acid biosynthesis; L-isoleucine biosynthesis; 2-oxobutanoate from L-threonine: step 1/1. With respect to regulation, allosterically inhibited by isoleucine. The chain is Threonine dehydratase biosynthetic, chloroplastic from Cicer arietinum (Chickpea).